We begin with the raw amino-acid sequence, 73 residues long: MARRCEICGKGPLVGNTVSHANNKNKTRSLPNLRSVRANLAGEIRHIRVCTRCLKAGKVVKAGRGRPTASAQA.

This sequence belongs to the bacterial ribosomal protein bL28 family.

This chain is Large ribosomal subunit protein bL28, found in Anaeromyxobacter dehalogenans (strain 2CP-1 / ATCC BAA-258).